Consider the following 225-residue polypeptide: Insulin-induced gene 2 protein (225 aa).

Over 1–28 the chain is Cytoplasmic; the sequence is MAEGETKSPGPKKCGPYISSVTSQSVNL. The helical transmembrane segment at 29–51 threads the bilayer; that stretch reads MIRGVVLFFIGVFLALVLNLLQI. The Lumenal segment spans residues 52-70; sequence QRNVTLFPPDVIASIFSSA. A helical transmembrane segment spans residues 71–88; the sequence is WWVPPCCGTASAVIGLLY. Residues 89–103 are Cytoplasmic-facing; that stretch reads PCIDRHLGEPHKFKR. The chain crosses the membrane as a helical span at residues 104 to 126; that stretch reads EWSSVMRCVAVFVGINHASAKVD. The Lumenal portion of the chain corresponds to 127 to 129; that stretch reads FDN. A helical transmembrane segment spans residues 130–148; that stretch reads NIQLSLTLAALSIGLWWTF. At 149–153 the chain is on the cytoplasmic side; sequence DRSRS. At S151 the chain carries Phosphoserine. The chain crosses the membrane as a helical span at residues 154–175; sequence GFGLGVGIAFLATLVTQLLVYN. At 176–189 the chain is on the lumenal side; the sequence is GVYQYTSPDFLYVR. A helical transmembrane segment spans residues 190 to 207; that stretch reads SWLPCIFFAGGITMGNIG. Residues 208–225 are Cytoplasmic-facing; the sequence is RQLAMYECKVIAEKSHQE. Position 215 is a cysteine sulfenic acid (-SOH); alternate (C215). Residue C215 forms a Glycyl cysteine thioester (Cys-Gly) (interchain with G-Cter in ubiquitin); alternate linkage. A KxHxx motif is present at residues 219 to 225; that stretch reads AEKSHQE.

Belongs to the INSIG family. As to quaternary structure, interacts with SCAP; interaction is direct and only takes place in the presence of sterols; it prevents interaction between SCAP and the coat protein complex II (COPII). Associates with the SCAP-SREBP complex (composed of SCAP and SREBF1/SREBP1 or SREBF2/SREBP2); association is mediated via its interaction with SCAP and only takes place in the presence of sterols. Interacts with RNF139. Interacts with RNF145. In terms of processing, phosphorylation at Ser-151 by PCK1 reduces binding to oxysterol, disrupting the interaction between INSIG2 and SCAP, thereby promoting nuclear translocation of SREBP proteins (SREBF1/SREBP1 or SREBF2/SREBP2) and subsequent transcription of downstream lipogenesis-related genes. Polyubiquitinated by AMFR/gp78 at Cys-215 in some tissues such as adipose tissues, undifferentiated myoblasts and liver, leading to its degradation. In differentiated myotubes, Cys-215 oxidation prevents ubiquitination at the same site, resulting in protein stabilization. Post-translationally, oxidized at Cys-215 in differentiated myotubes, preventing ubiquitination at the same site, and resulting in protein stabilization.

Its subcellular location is the endoplasmic reticulum membrane. In terms of biological role, oxysterol-binding protein that mediates feedback control of cholesterol synthesis by controlling both endoplasmic reticulum to Golgi transport of SCAP and degradation of HMGCR. Acts as a negative regulator of cholesterol biosynthesis by mediating the retention of the SCAP-SREBP complex in the endoplasmic reticulum, thereby blocking the processing of sterol regulatory element-binding proteins (SREBPs) SREBF1/SREBP1 and SREBF2/SREBP2. Binds oxysterol, including 22-hydroxycholesterol, 24-hydroxycholesterol, 25-hydroxycholesterol and 27-hydroxycholesterol, regulating interaction with SCAP and retention of the SCAP-SREBP complex in the endoplasmic reticulum. In presence of oxysterol, interacts with SCAP, retaining the SCAP-SREBP complex in the endoplasmic reticulum, thereby preventing SCAP from escorting SREBF1/SREBP1 and SREBF2/SREBP2 to the Golgi. Sterol deprivation or phosphorylation by PCK1 reduce oxysterol-binding, disrupting the interaction between INSIG2 and SCAP, thereby promoting Golgi transport of the SCAP-SREBP complex, followed by processing and nuclear translocation of SREBF1/SREBP1 and SREBF2/SREBP2. Also regulates cholesterol synthesis by regulating degradation of HMGCR: initiates the sterol-mediated ubiquitin-mediated endoplasmic reticulum-associated degradation (ERAD) of HMGCR via recruitment of the reductase to the ubiquitin ligase RNF139. The sequence is that of Insulin-induced gene 2 protein from Sus scrofa (Pig).